A 223-amino-acid polypeptide reads, in one-letter code: Adenylate kinase 4, mitochondrial (223 aa).

Residue 15-20 (GSGKGT) participates in a ribonucleoside 5'-triphosphate binding. The segment at 35–64 (SSGHFLRENIKANTEVGDMAKQYIEKGLLV) is NMP. Residues Ser36 and Arg41 each coordinate AMP. Lys60 carries the N6-succinyllysine modification. AMP is bound by residues 62–64 (LLV), 89–92 (GFPR), and Gln96. An LID region spans residues 125-162 (RRWIHPPSGRVYNLDFNPPHVHGMDDVTGEPLVQQEDD). Residues Arg126 and 135–136 (VY) contribute to the a ribonucleoside 5'-triphosphate site. Position 170 (Arg170) interacts with AMP. An N6-acetyllysine modification is found at Lys175. Residues Lys179 and Lys186 each carry the N6-acetyllysine; alternate modification. 2 positions are modified to N6-succinyllysine; alternate: Lys179 and Lys186. Thr199 serves as a coordination point for a ribonucleoside 5'-triphosphate.

This sequence belongs to the adenylate kinase family. AK3 subfamily. As to quaternary structure, monomer. Interacts with SLC25A5/ANT2.

The protein resides in the mitochondrion matrix. The enzyme catalyses a ribonucleoside 5'-phosphate + ATP = a ribonucleoside 5'-diphosphate + ADP. It catalyses the reaction AMP + ATP = 2 ADP. The catalysed reaction is GTP + AMP = GDP + ADP. It carries out the reaction CMP + ATP = CDP + ADP. The enzyme catalyses GTP + CMP = CDP + GDP. It catalyses the reaction dAMP + ATP = dADP + ADP. The catalysed reaction is dCMP + ATP = dCDP + ADP. It carries out the reaction a 2'-deoxyribonucleoside 5'-diphosphate + ATP = a 2'-deoxyribonucleoside 5'-triphosphate + ADP. The enzyme catalyses a ribonucleoside 5'-diphosphate + ATP = a ribonucleoside 5'-triphosphate + ADP. It catalyses the reaction GDP + ATP = GTP + ADP. The catalysed reaction is CDP + GTP = CTP + GDP. It carries out the reaction CDP + ATP = CTP + ADP. The enzyme catalyses UDP + ATP = UTP + ADP. It catalyses the reaction GTP + UDP = UTP + GDP. The catalysed reaction is dADP + GTP = dATP + GDP. It carries out the reaction dCDP + GTP = dCTP + GDP. The enzyme catalyses dCDP + ATP = dCTP + ADP. It catalyses the reaction dGDP + ATP = dGTP + ADP. The catalysed reaction is dTDP + GTP = dTTP + GDP. It carries out the reaction dTDP + ATP = dTTP + ADP. Its function is as follows. Broad-specificity mitochondrial nucleoside phosphate kinase involved in cellular nucleotide homeostasis by catalyzing nucleoside-phosphate interconversions. Similar to other adenylate kinases, preferentially catalyzes the phosphorylation of the nucleoside monophosphate AMP with ATP as phosphate donor to produce ADP. Phosphorylates only AMP when using GTP as phosphate donor. In vitro, can also catalyze the phosphorylation of CMP, dAMP and dCMP and use GTP as an alternate phosphate donor. Moreover, exhibits a diphosphate kinase activity, producing ATP, CTP, GTP, UTP, TTP, dATP, dCTP and dGTP from the corresponding diphosphate substrates with either ATP or GTP as phosphate donors. Plays a role in controlling cellular ATP levels by regulating phosphorylation and activation of the energy sensor protein kinase AMPK. Plays a protective role in the cellular response to oxidative stress. This is Adenylate kinase 4, mitochondrial from Bos taurus (Bovine).